Reading from the N-terminus, the 503-residue chain is MEEFQRYLELDRSQQHYFLYPLIFQEYIYALAHDHGLNINRSILLENAGYDKKFSLLIVKRLIARMYQQNHLILSTNDSNQNRFLRRNKNLYSQMISEGFAVIVEIPFYLQLKSSLESKGIVKSHNLRSIHSIFPFLEDKISHLIYGLEILIPYPVHLEILVQTLRYWVKDASSLHLLRFFLHEYCNWNTPNKAGSSFSKRNQRLFFLLYNSHLCEYESIFIFLRNQSSHLRSTSSGTLLERIYFYGKIKYLVKVFVKAFQVNLLLLKDPFMHYVRYQGKSILASKGTPFLMKKWTYYFVNLWQCHFYLWSQPGRICINQLYNHSLDILGYLSSARLNPSMVRGQMLENSFLIDNAINKFDAIVPIIPLIGSLAKAKFCNVLGHPISKAVWTDLSDSDIIDQFGRICRNLSHYHSGSSQKKSLYRIKYILRLSCARTLARKHKSTVRAFLKRLGSGLLEEFFTAEEQVLYLTFPRASSASQRLYRRRIWYLDIICINDLANHE.

It belongs to the intron maturase 2 family. MatK subfamily.

The protein resides in the plastid. Its subcellular location is the chloroplast. In terms of biological role, usually encoded in the trnK tRNA gene intron. Probably assists in splicing its own and other chloroplast group II introns. The sequence is that of Maturase K from Panax quinquefolius (American ginseng).